Here is an 859-residue protein sequence, read N- to C-terminus: Protein SEY1 (859 aa).

The Cytoplasmic portion of the chain corresponds to 1 to 742; the sequence is MMMNSHFAGV…KRSAIGGITQ (742 aa). The GB1/RHD3-type G domain occupies 49-291; that stretch reads GFNYHLISVF…FQPQYHRRIP (243 aa). 59-66 serves as a coordination point for GTP; sequence GSQSTGKS. Residues 476-496 adopt a coiled-coil conformation; it reads FEHELKVYRKDLDDVSGRLRK. The disordered stretch occupies residues 525–544; it reads LGTGRGGSGAPEHGERPPSE. The helical transmembrane segment at 743–763 threads the bilayer; the sequence is VPLYFYGLLVALGWNEIVAVL. The Lumenal portion of the chain corresponds to 764–766; that stretch reads RNP. Residues 767-787 form a helical membrane-spanning segment; the sequence is VYFIFLILCAVGAYVTYTLNL. The Cytoplasmic segment spans residues 788-859; the sequence is WGPMIRMGNA…DAEVEDLDDI (72 aa). Positions 816-859 are disordered; the sequence is SSESGRQAMAMSGNQPRGESVRMNRLNGNGKKDEDAEVEDLDDI. Residues 850–859 are compositionally biased toward acidic residues; it reads DAEVEDLDDI.

The protein belongs to the TRAFAC class dynamin-like GTPase superfamily. GB1/RHD3 GTPase family. RHD3 subfamily.

The protein localises to the endoplasmic reticulum membrane. In terms of biological role, cooperates with the reticulon proteins and tubule-shaping DP1 family proteins to generate and maintain the structure of the tubular endoplasmic reticulum network. Has GTPase activity, which is required for its function in ER organization. This is Protein SEY1 from Phaeosphaeria nodorum (strain SN15 / ATCC MYA-4574 / FGSC 10173) (Glume blotch fungus).